The primary structure comprises 166 residues: Bacterial non-heme ferritin (166 aa).

The region spanning 2-145 (LSKNLLEALN…THINYLTRIG (144 aa)) is the Ferritin-like diiron domain. Positions 17, 50, 53, 94, and 127 each coordinate Fe cation.

The protein belongs to the ferritin family. Prokaryotic subfamily.

The protein resides in the cytoplasm. It carries out the reaction 4 Fe(2+) + O2 + 6 H2O = 4 iron(III) oxide-hydroxide + 12 H(+). Iron-storage protein. The chain is Bacterial non-heme ferritin (ftnA) from Staphylococcus aureus (strain MRSA252).